The primary structure comprises 195 residues: Probable chemoreceptor glutamine deamidase CheD 2 (195 aa).

Belongs to the CheD family.

It catalyses the reaction L-glutaminyl-[protein] + H2O = L-glutamyl-[protein] + NH4(+). Its function is as follows. Probably deamidates glutamine residues to glutamate on methyl-accepting chemotaxis receptors (MCPs), playing an important role in chemotaxis. This is Probable chemoreceptor glutamine deamidase CheD 2 from Burkholderia thailandensis (strain ATCC 700388 / DSM 13276 / CCUG 48851 / CIP 106301 / E264).